Here is a 212-residue protein sequence, read N- to C-terminus: Ribosomal RNA small subunit methyltransferase G (212 aa).

S-adenosyl-L-methionine is bound by residues Gly80, Leu85, 131–132 (AE), and Arg146.

This sequence belongs to the methyltransferase superfamily. RNA methyltransferase RsmG family.

It localises to the cytoplasm. It catalyses the reaction guanosine(527) in 16S rRNA + S-adenosyl-L-methionine = N(7)-methylguanosine(527) in 16S rRNA + S-adenosyl-L-homocysteine. Its function is as follows. Specifically methylates the N7 position of guanine in position 527 of 16S rRNA. The sequence is that of Ribosomal RNA small subunit methyltransferase G from Xanthomonas axonopodis pv. citri (strain 306).